The following is a 439-amino-acid chain: MRFQLCYLLGLLSVTSLSHAASNLICYYDSTSYLRQGLAKMHTHELDLALQFCTHLVYGYAGLKAGTLELFSLNVDLDMFYYKEITALRQKFPQLKILLSVGGDRDVDEAHPNKYVELLEANRTFQQNFIDSSMILVKRNGFDGLDLAFQLPRNKPRKVHGSLGTYWKSFKKLFTGDFVVDPLAEQHKSQFTDLVGNLKNAFRSANLMLSLTVLPNVNSTWYFDVPKLHPQFEYINLAAFDFLTPVRNPEEADFTAPIFFQDEQNRLPHLNVEFQVNYWLQNNCPGQKLNLGIASYGRAWKLSKGSGLSGAPIVQETCGAAPGGIQIQSADGLLSWPEICSKLSQNASAQYRGEMAPLRKVTDLTQKYGNYALRPADDNGDFGVWLSFDDPDFAGIKAAYAKGKGLGGVAIFDLSYDDFRGLCTGQKFPIVRSIKYFMG.

The signal sequence occupies residues 1–20; the sequence is MRFQLCYLLGLLSVTSLSHA. The region spanning 22–439 is the GH18 domain; sequence SNLICYYDST…IVRSIKYFMG (418 aa). Cysteine 26 and cysteine 53 form a disulfide bridge. 3 N-linked (GlcNAc...) asparagine glycosylation sites follow: asparagine 122, asparagine 218, and asparagine 346. The cysteines at positions 340 and 423 are disulfide-linked.

The protein belongs to the glycosyl hydrolase 18 family. IDGF subfamily. Glycosylated.

The protein resides in the secreted. Cooperates with insulin-like peptides to stimulate the proliferation, polarization and motility of imaginal disk cells. May act by stabilizing the binding of insulin-like peptides to its receptor through a simultaneous interaction with both molecules to form a multiprotein signaling complex. This chain is Chitinase-like protein Idgf1 (Idgf1), found in Drosophila yakuba (Fruit fly).